The chain runs to 254 residues: Triosephosphate isomerase (254 aa).

Residue 12-14 (NWK) coordinates substrate. The active-site Electrophile is the His99. The active-site Proton acceptor is the Glu169. Substrate is bound by residues Gly175, Ser214, and 235–236 (GG).

It belongs to the triosephosphate isomerase family. In terms of assembly, homodimer.

It localises to the cytoplasm. The catalysed reaction is D-glyceraldehyde 3-phosphate = dihydroxyacetone phosphate. Its pathway is carbohydrate biosynthesis; gluconeogenesis. It functions in the pathway carbohydrate degradation; glycolysis; D-glyceraldehyde 3-phosphate from glycerone phosphate: step 1/1. Involved in the gluconeogenesis. Catalyzes stereospecifically the conversion of dihydroxyacetone phosphate (DHAP) to D-glyceraldehyde-3-phosphate (G3P). In Bartonella tribocorum (strain CIP 105476 / IBS 506), this protein is Triosephosphate isomerase.